The sequence spans 512 residues: FACT complex subunit pob3 (512 aa).

Over residues 460-504 the composition is skewed to acidic residues; it reads LDDEDEEGDEEMEEALSEDEDFQAESESDVAEEYDENAESSDEEG. The segment at 460–512 is disordered; the sequence is LDDEDEEGDEEMEEALSEDEDFQAESESDVAEEYDENAESSDEEGASGAEGSE.

The protein belongs to the SSRP1 family. As to quaternary structure, forms a stable heterodimer with spt16. The spt16-pob3 dimer weakly associates with multiple molecules of nhp6 to form the FACT complex. Interacts with abo1.

The protein localises to the nucleus. Its subcellular location is the chromosome. In terms of biological role, component of the FACT complex, a general chromatin factor that acts to reorganize nucleosomes. The FACT complex is involved in multiple processes that require DNA as a template such as mRNA elongation, DNA replication and DNA repair. During transcription elongation the FACT complex acts as a histone chaperone that both destabilizes and restores nucleosomal structure. It facilitates the passage of RNA polymerase II and transcription by promoting the dissociation of one histone H2A-H2B dimer from the nucleosome, then subsequently promotes the reestablishment of the nucleosome following the passage of RNA polymerase II. The polypeptide is FACT complex subunit pob3 (Schizosaccharomyces pombe (strain 972 / ATCC 24843) (Fission yeast)).